The following is a 531-amino-acid chain: MKVKRPVLLAILDGWGISEPDKGNAVDNANMVFVEYLKKTYPWLKAHASGKWVGLPENQMGNSEVGHIHLGAGRINLESLAKLNHETKTNNIAKNDEIVKTFEYVKKNNSALHLMGLFSNGGVHSHFDHMIAIYKAAIDYGITNIKFDLITDGRDTKPKLAYDFIKDLLELIKQNNNIGIISSISGRYYAMDRDKRFDRSRIAYNAIVNRNNVRSFTNILDYIQQEYMINHDDEMIIPAFNQDDLNGNLKANDAIIMTNFRPDRAIQISSILTNKNYIAWQNEAFSDAEFIGDKIRFVSMMKYSDSVTSPHIAYPPKPLTNTLGQYLSQLGLKQLRIAETEKIAHVTFFFDGGNDYFKNGLAKNDEITLANAYIDLIPSAKVATYDLKPQMSAVEITDKLLEEIKKDEFDFIVLNFANCDMVGHTGNNKATEIACKTLDEQLKRIHEEFVLRHNGIMVITADHGNAEIMIDKDGQVNKKHTTSLVPIIITDLNIKLKQNDPEIAKVAPTILDLMNIEIPKEMELESMIDHN.

Mn(2+)-binding residues include Asp13 and Ser63. The active-site Phosphoserine intermediate is Ser63. Substrate is bound by residues His124, 154-155 (RD), Arg187, Arg193, 261-264 (RPDR), and Lys342. 5 residues coordinate Mn(2+): Asp420, His424, Asp462, His463, and His480.

This sequence belongs to the BPG-independent phosphoglycerate mutase family. Monomer. It depends on Mn(2+) as a cofactor.

The enzyme catalyses (2R)-2-phosphoglycerate = (2R)-3-phosphoglycerate. It participates in carbohydrate degradation; glycolysis; pyruvate from D-glyceraldehyde 3-phosphate: step 3/5. Catalyzes the interconversion of 2-phosphoglycerate and 3-phosphoglycerate. This Mycoplasma mycoides subsp. mycoides SC (strain CCUG 32753 / NCTC 10114 / PG1) protein is 2,3-bisphosphoglycerate-independent phosphoglycerate mutase.